The following is a 164-amino-acid chain: Pyruvoyl-dependent arginine decarboxylase (164 aa).

A Pyruvic acid (Ser) modification is found at serine 52.

Belongs to the PdaD family. The cofactor is pyruvate.

It catalyses the reaction L-arginine + H(+) = agmatine + CO2. The polypeptide is Pyruvoyl-dependent arginine decarboxylase (Methanococcus maripaludis (strain C7 / ATCC BAA-1331)).